The primary structure comprises 201 residues: Ribosomal RNA large subunit methyltransferase E (201 aa).

The S-adenosyl-L-methionine site is built by G49, W51, D69, D87, and D111. K151 (proton acceptor) is an active-site residue.

The protein belongs to the class I-like SAM-binding methyltransferase superfamily. RNA methyltransferase RlmE family.

The protein localises to the cytoplasm. It carries out the reaction uridine(2552) in 23S rRNA + S-adenosyl-L-methionine = 2'-O-methyluridine(2552) in 23S rRNA + S-adenosyl-L-homocysteine + H(+). Functionally, specifically methylates the uridine in position 2552 of 23S rRNA at the 2'-O position of the ribose in the fully assembled 50S ribosomal subunit. The sequence is that of Ribosomal RNA large subunit methyltransferase E from Nitratidesulfovibrio vulgaris (strain DSM 19637 / Miyazaki F) (Desulfovibrio vulgaris).